A 413-amino-acid polypeptide reads, in one-letter code: Multifunctional CCA protein (413 aa).

Residues glycine 8 and arginine 11 each contribute to the ATP site. CTP contacts are provided by glycine 8 and arginine 11. Mg(2+) is bound by residues aspartate 21 and aspartate 23. 3 residues coordinate ATP: arginine 91, arginine 143, and arginine 146. Arginine 91, arginine 143, and arginine 146 together coordinate CTP. The 102-residue stretch at 232 to 333 (TGVHVMMVVD…VRLFERSDAL (102 aa)) folds into the HD domain.

The protein belongs to the tRNA nucleotidyltransferase/poly(A) polymerase family. Bacterial CCA-adding enzyme type 1 subfamily. In terms of assembly, monomer. Can also form homodimers and oligomers. Mg(2+) is required as a cofactor. The cofactor is Ni(2+).

It catalyses the reaction a tRNA precursor + 2 CTP + ATP = a tRNA with a 3' CCA end + 3 diphosphate. The enzyme catalyses a tRNA with a 3' CCA end + 2 CTP + ATP = a tRNA with a 3' CCACCA end + 3 diphosphate. In terms of biological role, catalyzes the addition and repair of the essential 3'-terminal CCA sequence in tRNAs without using a nucleic acid template. Adds these three nucleotides in the order of C, C, and A to the tRNA nucleotide-73, using CTP and ATP as substrates and producing inorganic pyrophosphate. tRNA 3'-terminal CCA addition is required both for tRNA processing and repair. Also involved in tRNA surveillance by mediating tandem CCA addition to generate a CCACCA at the 3' terminus of unstable tRNAs. While stable tRNAs receive only 3'-terminal CCA, unstable tRNAs are marked with CCACCA and rapidly degraded. The sequence is that of Multifunctional CCA protein from Burkholderia cenocepacia (strain ATCC BAA-245 / DSM 16553 / LMG 16656 / NCTC 13227 / J2315 / CF5610) (Burkholderia cepacia (strain J2315)).